A 476-amino-acid polypeptide reads, in one-letter code: Bifunctional protein HldE (476 aa).

The interval 1–319 (MKITLPEYDK…ANAVYSQQEI (319 aa)) is ribokinase. 196 to 199 (NLAE) is an ATP binding site. Asp265 is an active-site residue. Residues 345 to 476 (MTNGCFDILH…EIIKTIRNNS (132 aa)) are cytidylyltransferase.

The protein in the N-terminal section; belongs to the carbohydrate kinase PfkB family. In the C-terminal section; belongs to the cytidylyltransferase family. As to quaternary structure, homodimer.

The enzyme catalyses D-glycero-beta-D-manno-heptose 7-phosphate + ATP = D-glycero-beta-D-manno-heptose 1,7-bisphosphate + ADP + H(+). It catalyses the reaction D-glycero-beta-D-manno-heptose 1-phosphate + ATP + H(+) = ADP-D-glycero-beta-D-manno-heptose + diphosphate. The protein operates within nucleotide-sugar biosynthesis; ADP-L-glycero-beta-D-manno-heptose biosynthesis; ADP-L-glycero-beta-D-manno-heptose from D-glycero-beta-D-manno-heptose 7-phosphate: step 1/4. Its pathway is nucleotide-sugar biosynthesis; ADP-L-glycero-beta-D-manno-heptose biosynthesis; ADP-L-glycero-beta-D-manno-heptose from D-glycero-beta-D-manno-heptose 7-phosphate: step 3/4. Its function is as follows. Catalyzes the phosphorylation of D-glycero-D-manno-heptose 7-phosphate at the C-1 position to selectively form D-glycero-beta-D-manno-heptose-1,7-bisphosphate. In terms of biological role, catalyzes the ADP transfer from ATP to D-glycero-beta-D-manno-heptose 1-phosphate, yielding ADP-D-glycero-beta-D-manno-heptose. This Psychromonas ingrahamii (strain DSM 17664 / CCUG 51855 / 37) protein is Bifunctional protein HldE.